We begin with the raw amino-acid sequence, 217 residues long: MKHQFSALEARVIGCMLEKQVTTPEQYPLSVNGVVTACNQKTNREPVMNLSEAQVQETLDQLVKRHYLRTVSGFGNRVTKYEQRFCNSEFGDLKFSPAEVALVTTLLLRGAQTPGELRSRAARMHEFSDTAALESALETLATREDGPFVTRLPREPGKRESRYMHLFCGEPDTATLAASNETAGVDTDALTARVEALELEVAELRERLESLLGHLGE.

This sequence belongs to the UPF0502 family.

The sequence is that of UPF0502 protein ESA_02280 from Cronobacter sakazakii (strain ATCC BAA-894) (Enterobacter sakazakii).